A 322-amino-acid polypeptide reads, in one-letter code: GTP 3',8-cyclase (322 aa).

The region spanning 5 to 233 is the Radical SAM core domain; it reads KYGRVVDYLR…NAPASIYRLD (229 aa). Arg-14 is a binding site for GTP. Cys-21 and Cys-25 together coordinate [4Fe-4S] cluster. S-adenosyl-L-methionine is bound at residue Tyr-27. Cys-28 contributes to the [4Fe-4S] cluster binding site. Arg-64 is a binding site for GTP. Gly-68 contributes to the S-adenosyl-L-methionine binding site. Thr-95 serves as a coordination point for GTP. Ser-119 contributes to the S-adenosyl-L-methionine binding site. A GTP-binding site is contributed by Lys-155. Met-189 serves as a coordination point for S-adenosyl-L-methionine. The [4Fe-4S] cluster site is built by Cys-249 and Cys-252. 254–256 contacts GTP; the sequence is RIR. Cys-266 is a [4Fe-4S] cluster binding site.

This sequence belongs to the radical SAM superfamily. MoaA family. In terms of assembly, monomer and homodimer. The cofactor is [4Fe-4S] cluster.

It catalyses the reaction GTP + AH2 + S-adenosyl-L-methionine = (8S)-3',8-cyclo-7,8-dihydroguanosine 5'-triphosphate + 5'-deoxyadenosine + L-methionine + A + H(+). It participates in cofactor biosynthesis; molybdopterin biosynthesis. Catalyzes the cyclization of GTP to (8S)-3',8-cyclo-7,8-dihydroguanosine 5'-triphosphate. The chain is GTP 3',8-cyclase from Campylobacter curvus (strain 525.92).